A 77-amino-acid chain; its full sequence is U10-lycotoxin-Ls1a (77 aa).

Positions 1–20 (MKLIIFTGLVLFAIVSLIEA) are cleaved as a signal peptide. The propeptide occupies 21–26 (EEESGR).

Belongs to the neurotoxin 19 (CSTX) family. 09 (U10-Lctx) subfamily. In terms of processing, contains 4 disulfide bonds. Expressed by the venom gland.

The protein localises to the secreted. This chain is U10-lycotoxin-Ls1a, found in Lycosa singoriensis (Wolf spider).